The following is a 222-amino-acid chain: Probable translocation protein y4yL (222 aa).

The next 4 membrane-spanning stretches (helical) occupy residues Pro-6–Val-26, Pro-52–Ala-72, Ile-158–Met-178, and Met-182–Ile-202.

It belongs to the FliP/MopC/SpaP family.

The protein localises to the cell membrane. Its function is as follows. Could be involved in the secretion of an unknown factor. The chain is Probable translocation protein y4yL from Sinorhizobium fredii (strain NBRC 101917 / NGR234).